Reading from the N-terminus, the 473-residue chain is Chromosomal replication initiator protein DnaA (473 aa).

Residues 1–87 (MADGEESISV…LAVTTFAIVV (87 aa)) form a domain I, interacts with DnaA modulators region. Residues 87-132 (VNPEIQQESLSTVGEPEPTPAPYLDVATFTVAPPAEITAPPRNGDT) form a domain II region. The tract at residues 133–349 (RLNSKYSFDN…GTLIRVTAFA (217 aa)) is domain III, AAA+ region. Positions 177, 179, 180, and 181 each coordinate ATP. A domain IV, binds dsDNA region spans residues 350–473 (SLNRTPVDMP…LTSRIKQNHR (124 aa)).

The protein belongs to the DnaA family. As to quaternary structure, oligomerizes as a right-handed, spiral filament on DNA at oriC.

The protein localises to the cytoplasm. Functionally, plays an essential role in the initiation and regulation of chromosomal replication. ATP-DnaA binds to the origin of replication (oriC) to initiate formation of the DNA replication initiation complex once per cell cycle. Binds the DnaA box (a 9 base pair repeat at the origin) and separates the double-stranded (ds)DNA. Forms a right-handed helical filament on oriC DNA; dsDNA binds to the exterior of the filament while single-stranded (ss)DNA is stabiized in the filament's interior. The ATP-DnaA-oriC complex binds and stabilizes one strand of the AT-rich DNA unwinding element (DUE), permitting loading of DNA polymerase. After initiation quickly degrades to an ADP-DnaA complex that is not apt for DNA replication. Binds acidic phospholipids. The chain is Chromosomal replication initiator protein DnaA from Leifsonia xyli subsp. xyli (strain CTCB07).